Reading from the N-terminus, the 74-residue chain is MSETKTFEDKLQQLEGIVSELEKGDRPLETALADFQTGVGLVKELQGTLKHAEETLAKVMSDDDKLTDLELTND.

Belongs to the XseB family. Heterooligomer composed of large and small subunits.

It is found in the cytoplasm. The catalysed reaction is Exonucleolytic cleavage in either 5'- to 3'- or 3'- to 5'-direction to yield nucleoside 5'-phosphates.. Its function is as follows. Bidirectionally degrades single-stranded DNA into large acid-insoluble oligonucleotides, which are then degraded further into small acid-soluble oligonucleotides. The protein is Exodeoxyribonuclease 7 small subunit of Leuconostoc citreum (strain KM20).